A 494-amino-acid polypeptide reads, in one-letter code: uncharacterized protein (494 aa).

The protein belongs to the TPP enzyme family.

This is an uncharacterized protein from Methanocaldococcus jannaschii (strain ATCC 43067 / DSM 2661 / JAL-1 / JCM 10045 / NBRC 100440) (Methanococcus jannaschii).